A 514-amino-acid polypeptide reads, in one-letter code: 2,3-bisphosphoglycerate-independent phosphoglycerate mutase (514 aa).

The Mn(2+) site is built by Asp-14 and Ser-64. Ser-64 acts as the Phosphoserine intermediate in catalysis. Substrate is bound by residues His-125, 155–156 (RD), Arg-187, Arg-193, 263–266 (RADR), and Lys-336. Positions 403, 407, 444, 445, and 463 each coordinate Mn(2+).

It belongs to the BPG-independent phosphoglycerate mutase family. As to quaternary structure, monomer. Requires Mn(2+) as cofactor.

The catalysed reaction is (2R)-2-phosphoglycerate = (2R)-3-phosphoglycerate. The protein operates within carbohydrate degradation; glycolysis; pyruvate from D-glyceraldehyde 3-phosphate: step 3/5. Functionally, catalyzes the interconversion of 2-phosphoglycerate and 3-phosphoglycerate. The protein is 2,3-bisphosphoglycerate-independent phosphoglycerate mutase of Shewanella sp. (strain W3-18-1).